The chain runs to 206 residues: MGGKWSKSSLVGWPEVRDRLRRTQTAAEGVGPVSRDLARHGAITSRNTSQTNETLAWLEEVQNEEVGFPVRPQVPLRPMTFKGAFDLSHFLKEKGGLEGLVYSKKRQEILDLWVYHTQGFFPDWQNYTPGPGIRYPLTFGWCFKLVPLEPEEVERANEGDNNILLHPICQHGQEDEAREVLVWTFDSRLALKHRARELHPEYYKDC.

Residue Gly2 is the site of N-myristoyl glycine; by host attachment. Ser6 bears the Phosphoserine; by host mark. The acidic; interacts with host PACS1 and PACS2; stabilizes the interaction of NEF/MHC-I with host AP1M1; necessary for MHC-I internalization stretch occupies residues 62–65 (QNEE). Residues 69-78 (PVRPQVPLRP) form an SH3-binding; interaction with Src family tyrosine kinases region. A PxxP; stabilizes the interaction of NEF/MHC-I with host AP1M1; necessary for MHC-I internalization motif is present at residues 72 to 75 (PQVP). Residues 108-124 (EILDLWVYHTQGFFPDW) are mediates dimerization, Nef-PTE1 interaction. The binding to ATP6V1H stretch occupies residues 148 to 180 (LEPEEVERANEGDNNILLHPICQHGQEDEAREV). The Dileucine internalization motif; necessary for CD4 internalization signature appears at 164 to 165 (LL). The short motif at 174–175 (ED) is the Diacidic; necessary for CD4 internalization element.

Belongs to the lentivirus primate group Nef protein family. In terms of assembly, monomer; cytosolic form. Homodimer; membrane bound form. Interacts with Nef associated p21-activated kinase (PAK2); this interaction activates PAK2. Associates with the Nef-MHC-I-AP1 complex; this complex is required for MHC-I internalization. Interacts (via C-terminus) with host PI3-kinase. Interacts with host PACS1; this interaction seems to be weak. Interacts with host PACS2. Interacts with host LCK and MAPK3; these interactions inhibit the kinase activity of the latter. Interacts with host ATP6V1H; this interaction may play a role in CD4 endocytosis. Associates with the CD4-Nef-AP2 complex; this complex is required for CD4 internalization. Interacts with host AP2 subunit alpha and AP2 subunit sigma2. Interacts with TCR-zeta chain; this interaction up-regulates the Fas ligand (FasL) surface expression. Interacts with host HCK, LYN, and SRC; these interactions activate the Src family kinases. Interacts with MAP3K5; this interaction inhibits the Fas and TNFR-mediated death signals. Interacts with beta-COP and PTE1. Interacts with human RACK1; this increases Nef phosphorylation by PKC. Interacts with TP53; this interaction decreases the half-life of TP53, protecting the infected cell against p53-mediated apoptosis. In terms of processing, the virion-associated Nef proteins are cleaved by the viral protease to release the soluble C-terminal core protein. Nef is probably cleaved concomitantly with viral structural proteins on maturation of virus particles. Post-translationally, myristoylated. Phosphorylated on serine residues, probably by host PKCdelta and theta.

It localises to the host cell membrane. It is found in the virion. The protein resides in the secreted. The protein localises to the host Golgi apparatus membrane. Functionally, factor of infectivity and pathogenicity, required for optimal virus replication. Alters numerous pathways of T-lymphocyte function and down-regulates immunity surface molecules in order to evade host defense and increase viral infectivity. Alters the functionality of other immunity cells, like dendritic cells, monocytes/macrophages and NK cells. In infected CD4(+) T-lymphocytes, down-regulates the surface MHC-I, mature MHC-II, CD4, CD28, CCR5 and CXCR4 molecules. Mediates internalization and degradation of host CD4 through the interaction of with the cytoplasmic tail of CD4, the recruitment of AP-2 (clathrin adapter protein complex 2), internalization through clathrin coated pits, and subsequent transport to endosomes and lysosomes for degradation. Diverts host MHC-I molecules to the trans-Golgi network-associated endosomal compartments by an endocytic pathway to finally target them for degradation. MHC-I down-regulation may involve AP-1 (clathrin adapter protein complex 1) or possibly Src family kinase-ZAP70/Syk-PI3K cascade recruited by PACS2. In consequence infected cells are masked for immune recognition by cytotoxic T-lymphocytes. Decreasing the number of immune receptors also prevents reinfection by more HIV particles (superinfection). Down-regulates host SERINC3 and SERINC5 thereby excluding these proteins from the viral particles. Virion infectivity is drastically higher when SERINC3 or SERINC5 are excluded from the viral envelope, because these host antiviral proteins impair the membrane fusion event necessary for subsequent virion penetration. Its function is as follows. Bypasses host T-cell signaling by inducing a transcriptional program nearly identical to that of anti-CD3 cell activation. Interaction with TCR-zeta chain up-regulates the Fas ligand (FasL). Increasing surface FasL molecules and decreasing surface MHC-I molecules on infected CD4(+) cells send attacking cytotoxic CD8+ T-lymphocytes into apoptosis. In terms of biological role, plays a role in optimizing the host cell environment for viral replication without causing cell death by apoptosis. Protects the infected cells from apoptosis in order to keep them alive until the next virus generation is ready to strike. Inhibits the Fas and TNFR-mediated death signals by blocking MAP3K5/ASK1. Decreases the half-life of TP53, protecting the infected cell against p53-mediated apoptosis. Inhibits the apoptotic signals regulated by the Bcl-2 family proteins through the formation of a Nef/PI3-kinase/PAK2 complex that leads to activation of PAK2 and induces phosphorylation of host BAD. Functionally, extracellular Nef protein targets CD4(+) T-lymphocytes for apoptosis by interacting with CXCR4 surface receptors. The chain is Protein Nef from Simian immunodeficiency virus (isolate MB66) (SIV-cpz).